Here is a 500-residue protein sequence, read N- to C-terminus: MSWTASVFLRTSTTSMKFLRLRWPLPRIPQNKSANVAPRFRSKSAVSQLSSGFKFVQIRKSTCDSNEMTIKAIKARQIYDSRGNPTVEVDLTTELGLFRAAVPSGASTGVHEALELRDNDKANYHGKSVLKAVGHVNDTLGPELIKANLDVVDQASIDNFMIKLDGTENKSKFGANAILGVSLAVAKAGAAKKGVPLYKHIADLAGNKEIILPVPAFNVINGGSHAGNKLAMQEFMILPTGATSFTEAMKMGSEVYHHLKNVIKAKFGLDATAVGDEGGFAPNIQSNKEALNLISDAIAKAGYTGKIEIGMDVAASEFYKDGQYDLDFKNEKSDKSQWLPADKLANLYQEFIKDFPIVSIEDPFDQDHWEAWSNLTGCTDIQIVGDDLTVTNPKRIATAVEKKACNCLLLKVNQIGTVTESIAAHLLAKKNGWGTMVSHRSGETEDSFIGDLVVGLSTGQIKTGAPCRSERLAKYNQILRIEEEIGAGVKFAGKSFRKPQ.

Substrate contacts are provided by H225 and E234. E277 acts as the Proton donor in catalysis. Mg(2+) contacts are provided by D312, E361, and D386. E361 and D386 together coordinate substrate. K411 serves as the catalytic Proton acceptor. Substrate is bound by residues 438-441 and K462; that span reads SHRS.

Belongs to the enolase family. In terms of assembly, homodimer. The cofactor is Mg(2+).

The protein resides in the cytoplasm. It carries out the reaction (2R)-2-phosphoglycerate = phosphoenolpyruvate + H2O. The protein operates within carbohydrate degradation; glycolysis; pyruvate from D-glyceraldehyde 3-phosphate: step 4/5. In terms of biological role, enzyme of the glycolytic pathway. Glycolysis is essential in glial cells but not in neurons; neurons rely on the citric acid cycle for their energy needs, and on lactate and alanine secreted into the hemolymph by glial cells to fuel it. The polypeptide is Enolase (Drosophila melanogaster (Fruit fly)).